A 119-amino-acid polypeptide reads, in one-letter code: MKRIAFVFSTTPHGSASGREGLDALLATSALTEETGVFFIGDGVFQILSGQTPDVVLARDYIATFKLLGLYDIEQCWLCAASLRERGLETGASFIVDATPLEPEALRGELDNYDVILRF.

It belongs to the DsrF/TusC family. Heterohexamer, formed by a dimer of trimers. The hexameric TusBCD complex contains 2 copies each of TusB, TusC and TusD. The TusBCD complex interacts with TusE.

It is found in the cytoplasm. Functionally, part of a sulfur-relay system required for 2-thiolation of 5-methylaminomethyl-2-thiouridine (mnm(5)s(2)U) at tRNA wobble positions. In Citrobacter koseri (strain ATCC BAA-895 / CDC 4225-83 / SGSC4696), this protein is Protein TusC.